The sequence spans 274 residues: Formamidopyrimidine-DNA glycosylase (274 aa).

Pro-2 (schiff-base intermediate with DNA) is an active-site residue. Glu-3 (proton donor) is an active-site residue. Catalysis depends on Lys-57, which acts as the Proton donor; for beta-elimination activity. The DNA site is built by His-92, Arg-111, and Lys-152. The segment at 237-271 adopts an FPG-type zinc-finger fold; sequence QVYGRKGEECRECGTLIQAKVIGQRNSYFCPDCQP. Arg-261 functions as the Proton donor; for delta-elimination activity in the catalytic mechanism.

This sequence belongs to the FPG family. As to quaternary structure, monomer. Requires Zn(2+) as cofactor.

It carries out the reaction Hydrolysis of DNA containing ring-opened 7-methylguanine residues, releasing 2,6-diamino-4-hydroxy-5-(N-methyl)formamidopyrimidine.. The catalysed reaction is 2'-deoxyribonucleotide-(2'-deoxyribose 5'-phosphate)-2'-deoxyribonucleotide-DNA = a 3'-end 2'-deoxyribonucleotide-(2,3-dehydro-2,3-deoxyribose 5'-phosphate)-DNA + a 5'-end 5'-phospho-2'-deoxyribonucleoside-DNA + H(+). In terms of biological role, involved in base excision repair of DNA damaged by oxidation or by mutagenic agents. Acts as a DNA glycosylase that recognizes and removes damaged bases. Has a preference for oxidized purines, such as 7,8-dihydro-8-oxoguanine (8-oxoG). Has AP (apurinic/apyrimidinic) lyase activity and introduces nicks in the DNA strand. Cleaves the DNA backbone by beta-delta elimination to generate a single-strand break at the site of the removed base with both 3'- and 5'-phosphates. This Haemophilus ducreyi (strain 35000HP / ATCC 700724) protein is Formamidopyrimidine-DNA glycosylase.